The primary structure comprises 1036 residues: uncharacterized protein (1036 aa).

2 consecutive transmembrane segments (helical) span residues Tyr4–Leu24 and Ile1004–Leu1024.

It belongs to the MG414/MG415 family.

Its subcellular location is the cell membrane. This is an uncharacterized protein from Mycoplasma genitalium (strain ATCC 33530 / DSM 19775 / NCTC 10195 / G37) (Mycoplasmoides genitalium).